The following is a 1896-amino-acid chain: von Willebrand factor A domain-containing protein 8 (1896 aa).

Residues 1-18 (MHSRILFKGTAAAVAARR) constitute a mitochondrion transit peptide. 439–446 (GAKGCGKS) is a binding site for ATP. Residues 1536-1564 (GLDVSSPKHGKIDAKNAPHVGGNQWAGGT) form a disordered region. In terms of domain architecture, VWFA spans 1705–1887 (RLRVLADVSG…KEIPQILQQI (183 aa)).

As to quaternary structure, monomer.

The protein resides in the mitochondrion. Functionally, exhibits ATPase activity in vitro. The chain is von Willebrand factor A domain-containing protein 8 (vwa8) from Danio rerio (Zebrafish).